Here is a 206-residue protein sequence, read N- to C-terminus: Large ribosomal subunit protein uL4 (206 aa).

Positions asparagine 43–lysine 52 are enriched in polar residues. The interval asparagine 43 to glycine 86 is disordered.

Belongs to the universal ribosomal protein uL4 family. Part of the 50S ribosomal subunit.

One of the primary rRNA binding proteins, this protein initially binds near the 5'-end of the 23S rRNA. It is important during the early stages of 50S assembly. It makes multiple contacts with different domains of the 23S rRNA in the assembled 50S subunit and ribosome. Its function is as follows. Forms part of the polypeptide exit tunnel. The chain is Large ribosomal subunit protein uL4 from Lachnoclostridium phytofermentans (strain ATCC 700394 / DSM 18823 / ISDg) (Clostridium phytofermentans).